An 88-amino-acid polypeptide reads, in one-letter code: MAHKKGTGSTRNGRDSNSKRLGVKAYGGESVTAGSILIRQRGTSVMPGVNVGRGKDDTLFALTDGIVKFESIRRGLRNRKRITVAAAE.

The segment at 1–24 is disordered; that stretch reads MAHKKGTGSTRNGRDSNSKRLGVK.

It belongs to the bacterial ribosomal protein bL27 family.

The protein is Large ribosomal subunit protein bL27 of Synechococcus sp. (strain CC9311).